The chain runs to 116 residues: Large ribosomal subunit protein bL20 (116 aa).

This sequence belongs to the bacterial ribosomal protein bL20 family.

Its function is as follows. Binds directly to 23S ribosomal RNA and is necessary for the in vitro assembly process of the 50S ribosomal subunit. It is not involved in the protein synthesizing functions of that subunit. This Mycoplasmopsis synoviae (strain 53) (Mycoplasma synoviae) protein is Large ribosomal subunit protein bL20.